Reading from the N-terminus, the 256-residue chain is 4-hydroxy-tetrahydrodipicolinate reductase (256 aa).

An NAD(+)-binding site is contributed by 8–13 (GASGKM). Residue lysine 36 coordinates NADP(+). NAD(+)-binding positions include 87-89 (GTT) and 111-114 (ATNM). Histidine 143 serves as the catalytic Proton donor/acceptor. (S)-2,3,4,5-tetrahydrodipicolinate is bound at residue histidine 144. The Proton donor role is filled by lysine 147. Residue 153–154 (GT) coordinates (S)-2,3,4,5-tetrahydrodipicolinate.

It belongs to the DapB family.

It is found in the cytoplasm. It carries out the reaction (S)-2,3,4,5-tetrahydrodipicolinate + NAD(+) + H2O = (2S,4S)-4-hydroxy-2,3,4,5-tetrahydrodipicolinate + NADH + H(+). It catalyses the reaction (S)-2,3,4,5-tetrahydrodipicolinate + NADP(+) + H2O = (2S,4S)-4-hydroxy-2,3,4,5-tetrahydrodipicolinate + NADPH + H(+). The protein operates within amino-acid biosynthesis; L-lysine biosynthesis via DAP pathway; (S)-tetrahydrodipicolinate from L-aspartate: step 4/4. In terms of biological role, catalyzes the conversion of 4-hydroxy-tetrahydrodipicolinate (HTPA) to tetrahydrodipicolinate. This chain is 4-hydroxy-tetrahydrodipicolinate reductase, found in Campylobacter concisus (strain 13826).